A 142-amino-acid chain; its full sequence is Large ribosomal subunit protein uL11 (142 aa).

This sequence belongs to the universal ribosomal protein uL11 family. As to quaternary structure, part of the ribosomal stalk of the 50S ribosomal subunit. Interacts with L10 and the large rRNA to form the base of the stalk. L10 forms an elongated spine to which L12 dimers bind in a sequential fashion forming a multimeric L10(L12)X complex. Post-translationally, one or more lysine residues are methylated.

Its function is as follows. Forms part of the ribosomal stalk which helps the ribosome interact with GTP-bound translation factors. This is Large ribosomal subunit protein uL11 from Vesicomyosocius okutanii subsp. Calyptogena okutanii (strain HA).